The primary structure comprises 768 residues: DNA ligase 1 (768 aa).

The disordered stretch occupies residues 42–139 (VEVSQSSSDS…KEPPLESNAR (98 aa)). Over residues 52–99 (KNVDGRSTSEKRKVESVKLVDESKHNNHDDTGTQNVERENNIVSEAKK) the composition is skewed to basic and acidic residues. The segment covering 104-124 (GSSSSSSDAVSSNNDSGASTP) has biased composition (low complexity). The interval 309–318 (KLRLQLAEKT) is interaction with target DNA. Glu-414 contributes to the ATP binding site. Lys-416 (N6-AMP-lysine intermediate) is an active-site residue. Positions 421 and 437 each coordinate ATP. Mg(2+) is bound at residue Glu-469. The interaction with target DNA stretch occupies residues 490–492 (KRK). Glu-568 contributes to the Mg(2+) binding site. Lys-573, Arg-587, and Lys-593 together coordinate ATP.

It belongs to the ATP-dependent DNA ligase family. Requires Mg(2+) as cofactor.

The protein localises to the nucleus. The enzyme catalyses ATP + (deoxyribonucleotide)n-3'-hydroxyl + 5'-phospho-(deoxyribonucleotide)m = (deoxyribonucleotide)n+m + AMP + diphosphate.. Functionally, DNA ligase that seals nicks in double-stranded DNA during DNA replication, DNA recombination and DNA repair. This is DNA ligase 1 (cdc17) from Schizosaccharomyces pombe (strain 972 / ATCC 24843) (Fission yeast).